Reading from the N-terminus, the 3678-residue chain is Dystrophin (3678 aa).

An actin-binding region spans residues 1 to 240; it reads MLWWEEVEDC…YITSLFQVLP (240 aa). Calponin-homology (CH) domains follow at residues 15 to 119 and 134 to 240; these read DVQK…LHWQ and TNSE…QVLP. Residues 63-72 form an ANK2- and ANK-3 binding region; it reads PKEKGSTRVH. The segment at 313-333 is disordered; the sequence is DSTQSPYPSQHLEAPRDKSLD. 24 Spectrin repeats span residues 341–449, 450–558, 561–669, 721–830, 832–936, 945–1047, 1050–1156, 1159–1265, 1268–1369, 1370–1465, 1470–1570, 1573–1678, 1681–1780, 1781–1876, 1879–1981, 1994–2103, 2106–2210, 2213–2318, 2319–2416, 2468–2570, 2573–2679, 2682–2795, 2801–2923, and 2928–3033; these read VNLD…KLHK, VLMD…VLQD, LKWQ…QISQ, ELRK…WLEY, TNII…ELQT, RYQE…KLEE, NKLR…ALKA, DKTV…TLEE, ACWH…LLEQ, SIQS…LFQK, EQRL…QLEK, KLSR…LLLE, KHME…KASI, PLKE…KALE, HQWY…TLHE, DVSY…RFDR, EKWR…RIEE, NVLS…ELEV, HLKD…LRTK, FNRA…QLNE, KDST…ALEE, RLLQ…HLEA, KRLH…RKID, and RLQE…QLHE. The segment at 1417 to 1915 is interaction with SYNM; sequence SDLTSHEISL…PEPRDERKLK (499 aa). Residues 3048–3081 form the WW domain; it reads TSVQGPWERAISPNKVPYYINHETQTTCWDHPKM. Positions 3051–3401 are interaction with SYNM; the sequence is QGPWERAISP…TVLEGDNMET (351 aa). The ZZ-type; degenerate zinc-finger motif lies at 3301–3357; sequence KHQAKCNICKECPIIGFRYRSLKHFNYDICQSCFFSGRVAKGHKMHYPMVEYCTPTT. Zn(2+) contacts are provided by Cys-3306, Cys-3309, Cys-3330, and Cys-3333. The interval 3459 to 3511 is binds to SNTB1; sequence DDEHLLIQHYCQSLNQDSPLSQPRSPAQILISLESEERGELERILADLEEENR. Phosphoserine is present on residues Ser-3476, Ser-3483, and Ser-3493. 2 disordered regions span residues 3521–3547 and 3596–3678; these read KQQH…QSPR and EAKV…EDTM. Polar residues-rich tracts occupy residues 3600–3619 and 3655–3665; these read NGTT…SSQP and QLNNSFPSSRG. 6 positions are modified to phosphoserine: Ser-3605, Ser-3606, Ser-3610, Ser-3616, Ser-3617, and Ser-3659.

As to quaternary structure, interacts with SYNM. Interacts with the syntrophins SNTG1 and SNTG2. Interacts with KRT19. Component of the dystrophin-associated glycoprotein complex which is composed of three subcomplexes: a cytoplasmic complex comprised of DMD (or UTRN), DTNA and a number of syntrophins, such as SNTB1, SNTB2, SNTG1 and SNTG2, the transmembrane dystroglycan complex, and the sarcoglycan-sarcospan complex. Interacts with DAG1 (betaDAG1) with DMD; the interaction is inhibited by phosphorylation on the PPXY motif of DAG1. Interacts with SYNM; SNTA1 and SNTB1. Interacts with CMYA5. Directly interacts with ANK2 and ANK3; these interactions do not interfere with betaDAG1-binding and are necessary for proper localization in muscle cells. Identified in a dystroglycan complex that contains at least PRX, DRP2, UTRN, DMD and DAG1. Interacts with DTNB. Interacts with PGM5; the interaction is direct. Interacts with NOS1; localizes NOS1 to sarcolemma in muscle cells. In terms of tissue distribution, detected in quadriceps muscle and in sciatic nerve (at protein level). Expressed in the sarcolemma of the soleus muscle (at protein level). Differentially expressed during skeletal muscle, heart, and brain development. Also expressed in retina.

The protein localises to the cell membrane. It is found in the sarcolemma. It localises to the cytoplasm. The protein resides in the cytoskeleton. Its subcellular location is the postsynaptic cell membrane. In terms of biological role, anchors the extracellular matrix to the cytoskeleton via F-actin. Ligand for dystroglycan. Component of the dystrophin-associated glycoprotein complex which accumulates at the neuromuscular junction (NMJ) and at a variety of synapses in the peripheral and central nervous systems and has a structural function in stabilizing the sarcolemma. Also implicated in signaling events and synaptic transmission. The chain is Dystrophin (Dmd) from Mus musculus (Mouse).